The following is a 208-amino-acid chain: Putative 3-methyladenine DNA glycosylase (208 aa).

The tract at residues 1 to 20 (MGRAHTVSRGEDHPPIARSE) is disordered.

This sequence belongs to the DNA glycosylase MPG family.

The polypeptide is Putative 3-methyladenine DNA glycosylase (Mesorhizobium japonicum (strain LMG 29417 / CECT 9101 / MAFF 303099) (Mesorhizobium loti (strain MAFF 303099))).